The chain runs to 410 residues: Transcription termination factor, mitochondrial (410 aa).

A mitochondrion-targeting transit peptide spans 1 to 44; sequence MIRSLLRSFETALKLHAGLNMHPMHCSRRLLFSQYENRASPSRL.

It belongs to the mTERF family.

It is found in the mitochondrion. Its function is as follows. Transcription termination factor. Binds promoter DNA and regulates mitochondrial replication and transcription. Transcription termination activity may be polarized with highest termination activity occurring when its DNA-binding site is positioned in the reverse orientation with respect to the incoming RNA polymerase. Required for normal topology and maintenance of mitochondrial DNA (mtDNA) levels. Regulates mtDNA replication by promoting replication pausing, possibly by acting as a natural barrier to replication fork progression. Its function in replication pausing prevents unregulated replication that may occur for example by collisions between the machineries of DNA replication and transcription during mtDNA synthesis. This ensures the incorporation of RNA transcripts into replication intermediates at the replication fork and allow for proper fork progression. Shares mtDNA binding sites with the mitochondrial termination factor mTerf5 and thereby may antagonize mTerf5 function during replication to regulate pausing. Likely to function downstream of Dref which activates genes involved in mtDNA replication and maintenance. The sequence is that of Transcription termination factor, mitochondrial from Drosophila melanogaster (Fruit fly).